We begin with the raw amino-acid sequence, 514 residues long: Pentatricopeptide repeat-containing protein At4g26800 (514 aa).

PPR repeat units follow at residues 122-156 (DLYT…GIEP), 157-191 (DIVT…GIKR), 192-226 (DVVV…GISP), 227-261 (NVVT…KINP), 262-296 (NVIT…SIDP), 297-331 (NVFT…GCTP), 332-366 (NVVT…GVAA), 367-401 (NTVS…GLIP), 402-436 (NIRS…RNDL), 437-471 (DIIT…RVEP), and 472-510 (DFKA…ESAP).

It belongs to the PPR family. P subfamily.

The sequence is that of Pentatricopeptide repeat-containing protein At4g26800 from Arabidopsis thaliana (Mouse-ear cress).